A 1798-amino-acid chain; its full sequence is Non-reducing polyketide synthase nscA (1798 aa).

The interval 25-256 is N-terminal acylcarrier protein transacylase domain (SAT); that stretch reads RRLDQHSKDR…PLPVYDGLCH (232 aa). The 434-residue stretch at 392-825 folds into the Ketosynthase family 3 (KS3) domain; sequence SSKLAIVGMA…GGNTTLLLED (434 aa). The tract at residues 436-455 is disordered; sequence NTHYDPTGKTENTTQTPYGN. The segment covering 444-453 has biased composition (polar residues); it reads KTENTTQTPY. Active-site for beta-ketoacyl synthase activity residues include C565, H700, and H743. Residues 931 to 1230 form a malonyl-CoA:ACP transacylase (MAT) domain region; sequence FTGQGAYYHG…PSASAMSSCR (300 aa). The N-terminal hotdog fold stretch occupies residues 1322 to 1458; the sequence is HQITAETVEA…AMIRFEDPVA (137 aa). The region spanning 1322–1632 is the PKS/mFAS DH domain; that stretch reads HQITAETVEA…FRRVPRLLMD (311 aa). Catalysis depends on H1354, which acts as the Proton acceptor; for dehydratase activity. The tract at residues 1390–1628 is product template (PT) domain; it reads HMNLTDVEVL…GMIRFRRVPR (239 aa). The C-terminal hotdog fold stretch occupies residues 1486–1632; sequence ASRLSKPLAY…FRRVPRLLMD (147 aa). Residue D1543 is the Proton donor; for dehydratase activity of the active site. The tract at residues 1685 to 1719 is disordered; it reads MASKAPEPAPLLATSSESSTPKESPIVTPAESERA. Residues 1698–1709 show a composition bias toward low complexity; it reads TSSESSTPKESP. The 78-residue stretch at 1721–1798 folds into the Carrier domain; that stretch reads PVDNNMISQC…EMTAWIEEYC (78 aa). S1758 carries the O-(pantetheine 4'-phosphoryl)serine modification.

It depends on pantetheine 4'-phosphate as a cofactor.

It participates in secondary metabolite biosynthesis. Non-reducing polyketide synthase; part of the gene cluster that mediates the biosynthesis of neosartoricin B, a prenylated anthracenone that probably exhibits T-cell antiproliferative activity, suggestive of a physiological role as an immunosuppressive agent. The non-reducing polyketide synthase nscA probably synthesizes and cyclizes the decaketide backbone. The hydrolase nscB then mediates the product release through hydrolysis followed by spontaneous decarboxylation. The prenyltransferase nscD catalyzes the addition of the dimethylallyl group to the aromatic C5. The FAD-dependent monooxygenase nscC is then responsible for the stereospecific hydroxylation at C2. Neosartoricin B can be converted into two additional compounds neosartoricins C and D. Neosartoricin C is a spirocyclic compound that is cyclized through the attack of C3 hydroxyl on C14, followed by dehydration. On the other hand, neosartoricin D is a further cyclized compound in which attack of C2 on C14 in neosartoricin C results in the formation of the acetal-containing dioxabicyclo-octanone ring. Both of these compounds are novel and possibly represent related metabolites of the gene cluster. This Arthroderma benhamiae (strain ATCC MYA-4681 / CBS 112371) (Trichophyton mentagrophytes) protein is Non-reducing polyketide synthase nscA.